The sequence spans 257 residues: Hydroxyacylglutathione hydrolase (257 aa).

Residues His54, His56, Asp58, His59, His113, Asp137, and His175 each contribute to the Zn(2+) site.

The protein belongs to the metallo-beta-lactamase superfamily. Glyoxalase II family. In terms of assembly, monomer. It depends on Zn(2+) as a cofactor.

It carries out the reaction an S-(2-hydroxyacyl)glutathione + H2O = a 2-hydroxy carboxylate + glutathione + H(+). Its pathway is secondary metabolite metabolism; methylglyoxal degradation; (R)-lactate from methylglyoxal: step 2/2. In terms of biological role, thiolesterase that catalyzes the hydrolysis of S-D-lactoyl-glutathione to form glutathione and D-lactic acid. This Rippkaea orientalis (strain PCC 8801 / RF-1) (Cyanothece sp. (strain PCC 8801)) protein is Hydroxyacylglutathione hydrolase.